Here is a 469-residue protein sequence, read N- to C-terminus: ATP synthase subunit beta (469 aa).

156–163 (GGAGVGKT) serves as a coordination point for ATP.

Belongs to the ATPase alpha/beta chains family. As to quaternary structure, F-type ATPases have 2 components, CF(1) - the catalytic core - and CF(0) - the membrane proton channel. CF(1) has five subunits: alpha(3), beta(3), gamma(1), delta(1), epsilon(1). CF(0) has three main subunits: a(1), b(2) and c(9-12). The alpha and beta chains form an alternating ring which encloses part of the gamma chain. CF(1) is attached to CF(0) by a central stalk formed by the gamma and epsilon chains, while a peripheral stalk is formed by the delta and b chains.

It is found in the cell membrane. It carries out the reaction ATP + H2O + 4 H(+)(in) = ADP + phosphate + 5 H(+)(out). Functionally, produces ATP from ADP in the presence of a proton gradient across the membrane. The catalytic sites are hosted primarily by the beta subunits. This chain is ATP synthase subunit beta, found in Lactococcus lactis subsp. lactis (strain IL1403) (Streptococcus lactis).